Here is a 147-residue protein sequence, read N- to C-terminus: uncharacterized protein (147 aa).

This is an uncharacterized protein from Homo sapiens (Human).